The sequence spans 197 residues: Putative protein N5-glutamine methyltransferase MJ0928 (197 aa).

Residues 42 to 46, aspartate 64, and asparagine 105 each bind S-adenosyl-L-methionine; that span reads GVGTG. Substrate is bound at residue 105–108; the sequence is NPPY.

Belongs to the eukaryotic/archaeal PrmC-related family.

It catalyses the reaction L-glutaminyl-[protein] + S-adenosyl-L-methionine = N(5)-methyl-L-glutaminyl-[protein] + S-adenosyl-L-homocysteine + H(+). Functionally, putative protein methyltransferase using S-adenosyl-L-methionine as the methyl donor. May methylate a Gln residue in target proteins. The polypeptide is Putative protein N5-glutamine methyltransferase MJ0928 (Methanocaldococcus jannaschii (strain ATCC 43067 / DSM 2661 / JAL-1 / JCM 10045 / NBRC 100440) (Methanococcus jannaschii)).